The chain runs to 504 residues: MEELRGYLELDRSWQRDFLYTLILQEYIYSLAHDHGFNRTIFLENAGYEKKYSFLIVKRLITRMYQQNHLILSANDSNQNEFLGQKKNLYSQMISEGFAFIVEIPFSLQLLFSLEGKEIXXXXXXRSIHSIFPFLEDKFSHLNYVLDILIPHPVHLEILVQTIRYWTKDASSLHLLRFFLYEYRNWNSRISIKQYISFFSNRNQRLFLFLYNSHVCEYESIFIFLRNQPFHLRSTFSGAFLERILFYEKMEHLVKVFTKNFQVILWFFKDTFIHYVRYQGKSFVASKGTSLLMIKWKYYLVNFWQCYFSVWSQPRRIYINQLSNHSLDFMXFLSSVRLNPSVVRIQMFEKSFIIDNAINTFDTLVPNIHMSGSFAKEKFCNIFGHPISKPVWADLSDSDIIDRFGRICRSLSHYYSGSSRKKSLYRIKYILRLSCARTLARKHKSTVRTFLKRLGSEFLEEFFMEEEKVLSLILPRDSYTSQRFYRGRIWYLDIFCIHDLANHE.

Belongs to the intron maturase 2 family. MatK subfamily.

The protein localises to the plastid. It localises to the chloroplast. Functionally, usually encoded in the trnK tRNA gene intron. Probably assists in splicing its own and other chloroplast group II introns. The protein is Maturase K of Nepenthes alata (Winged pitcher plant).